A 128-amino-acid chain; its full sequence is Sulfurtransferase TusD (128 aa).

The active-site Cysteine persulfide intermediate is the C78.

Belongs to the DsrE/TusD family. Heterohexamer, formed by a dimer of trimers. The hexameric TusBCD complex contains 2 copies each of TusB, TusC and TusD. The TusBCD complex interacts with TusE.

It is found in the cytoplasm. Functionally, part of a sulfur-relay system required for 2-thiolation of 5-methylaminomethyl-2-thiouridine (mnm(5)s(2)U) at tRNA wobble positions. Accepts sulfur from TusA and transfers it in turn to TusE. The polypeptide is Sulfurtransferase TusD (Buchnera aphidicola subsp. Acyrthosiphon pisum (strain 5A)).